The chain runs to 418 residues: Glutamyl-tRNA reductase (418 aa).

Residues 49–52, serine 108, 113–115, and glutamine 119 each bind substrate; these read TCNR and EPQ. Residue cysteine 50 is the Nucleophile of the active site. 188 to 193 provides a ligand contact to NADP(+); that stretch reads GAGETI.

Belongs to the glutamyl-tRNA reductase family. Homodimer.

The enzyme catalyses (S)-4-amino-5-oxopentanoate + tRNA(Glu) + NADP(+) = L-glutamyl-tRNA(Glu) + NADPH + H(+). It functions in the pathway porphyrin-containing compound metabolism; protoporphyrin-IX biosynthesis; 5-aminolevulinate from L-glutamyl-tRNA(Glu): step 1/2. In terms of biological role, catalyzes the NADPH-dependent reduction of glutamyl-tRNA(Glu) to glutamate 1-semialdehyde (GSA). This is Glutamyl-tRNA reductase from Aliivibrio salmonicida (strain LFI1238) (Vibrio salmonicida (strain LFI1238)).